The chain runs to 244 residues: Myosin-7 (244 aa).

The interval 1 to 244 (VEQTERSRKL…DIGTKGLNEE (244 aa)) is rodlike tail (S2 and LMM domains). Residues 1–244 (VEQTERSRKL…DIGTKGLNEE (244 aa)) adopt a coiled-coil conformation. The disordered stretch occupies residues 216–244 (EERADIAESQVNKLRAKSRDIGTKGLNEE). The segment covering 232–244 (KSRDIGTKGLNEE) has biased composition (basic and acidic residues).

As to quaternary structure, muscle myosin is a hexameric protein that consists of 2 heavy chain subunits (MHC), 2 alkali light chain subunits (MLC) and 2 regulatory light chain subunits (MLC-2). Interacts with ECPAS. Interacts (via C-terminus) with LRRC39.

The protein resides in the cytoplasm. The protein localises to the myofibril. It localises to the sarcomere. Its function is as follows. Myosins are actin-based motor molecules with ATPase activity essential for muscle contraction. Forms regular bipolar thick filaments that, together with actin thin filaments, constitute the fundamental contractile unit of skeletal and cardiac muscle. The sequence is that of Myosin-7 (MYH7) from Papio hamadryas (Hamadryas baboon).